A 51-amino-acid polypeptide reads, in one-letter code: DNA-binding protein (51 aa).

Positions 1–51 (MVYRRRRSRSADGTYTRRRRSSGYRRRPGRPRTYRRSRSATRRSGYRRRRY) are disordered. Repeat copies occupy residues 5-10 (RRRSRS) and 17-22 (RRRRSS). The tract at residues 5-22 (RRRSRSADGTYTRRRRSS) is 2 X 6 AA repeats of R-R-R-R-S-S. The segment covering 16–51 (TRRRRSSGYRRRPGRPRTYRRSRSATRRSGYRRRRY) has biased composition (basic residues).

Post-translationally, probably phosphorylated in infected cells.

It is found in the virion. In terms of biological role, thought to be responsible for DNA condensation during packaging of the nucleocapsids. This chain is DNA-binding protein (P6.5), found in Orgyia pseudotsugata (Douglas-fir tussock moth).